The sequence spans 63 residues: Large ribosomal subunit protein bL35 (63 aa).

A disordered region spans residues 1–22 (MPKMKTKSGATKRFKKTATGFK).

The protein belongs to the bacterial ribosomal protein bL35 family.

In Marinobacter nauticus (strain ATCC 700491 / DSM 11845 / VT8) (Marinobacter aquaeolei), this protein is Large ribosomal subunit protein bL35.